The chain runs to 266 residues: 4-hydroxy-tetrahydrodipicolinate reductase (266 aa).

10–15 is an NAD(+) binding site; sequence GPRGRM. Lys38 is an NADP(+) binding site. NAD(+) is bound by residues 99–101 and 125–128; these read GTT and APNF. His155 functions as the Proton donor/acceptor in the catalytic mechanism. His156 is a (S)-2,3,4,5-tetrahydrodipicolinate binding site. Lys159 functions as the Proton donor in the catalytic mechanism. Position 165–166 (165–166) interacts with (S)-2,3,4,5-tetrahydrodipicolinate; the sequence is GT.

The protein belongs to the DapB family.

The protein resides in the cytoplasm. It catalyses the reaction (S)-2,3,4,5-tetrahydrodipicolinate + NAD(+) + H2O = (2S,4S)-4-hydroxy-2,3,4,5-tetrahydrodipicolinate + NADH + H(+). It carries out the reaction (S)-2,3,4,5-tetrahydrodipicolinate + NADP(+) + H2O = (2S,4S)-4-hydroxy-2,3,4,5-tetrahydrodipicolinate + NADPH + H(+). Its pathway is amino-acid biosynthesis; L-lysine biosynthesis via DAP pathway; (S)-tetrahydrodipicolinate from L-aspartate: step 4/4. Functionally, catalyzes the conversion of 4-hydroxy-tetrahydrodipicolinate (HTPA) to tetrahydrodipicolinate. This chain is 4-hydroxy-tetrahydrodipicolinate reductase, found in Bacillus thuringiensis subsp. konkukian (strain 97-27).